The sequence spans 139 residues: MSYCRQEGKDKIIFVTKEDHETPSSAELIADDPNDPYEDHGLILPNGDINWNCPCLGGMASGPCGEQFKSAFSCFHYSQEEIKGSDCLDQFRAMQECMQKYPDIYPQEDDEDEAEKEKQNKEAEAFSTETSDTKEESSS.

Intrachain disulfides connect Cys53–Cys55, Cys64–Cys97, and Cys74–Cys87. The region spanning Ser61–Tyr105 is the CHCH domain. 2 consecutive short sequence motifs (cx9C motif) follow at residues Cys64–Cys74 and Cys87–Cys97. Residues Pro102–Ser139 form a disordered region. Basic and acidic residues predominate over residues Glu115–Glu124.

In terms of assembly, monomer. Can form homooligomers.

It is found in the mitochondrion intermembrane space. Functionally, central component of a redox-sensitive mitochondrial intermembrane space import machinery which is required for the biogenesis of respiratory chain complexes. Functions as chaperone and catalyzes the formation of disulfide bonds in substrate proteins, such as COX17 or MICU1. Required for the import and folding of small cysteine-containing proteins (small Tim) in the mitochondrial intermembrane space (IMS). Precursor proteins to be imported into the IMS are translocated in their reduced form into the mitochondria. The protein is Mitochondrial intermembrane space import and assembly protein 40 (chchd4) of Xenopus tropicalis (Western clawed frog).